The chain runs to 228 residues: Heptaprenylglyceryl phosphate synthase (228 aa).

K12 is a sn-glycerol 1-phosphate binding site. Positions 14 and 40 each coordinate Mg(2+). Residues 159 to 164, G189, and 209 to 210 each bind sn-glycerol 1-phosphate; these read YLEYSG and GN.

The protein belongs to the GGGP/HepGP synthase family. Group I subfamily. In terms of assembly, homodimer. Mg(2+) is required as a cofactor.

The enzyme catalyses sn-glycerol 1-phosphate + all-trans-heptaprenyl diphosphate = 3-heptaprenyl-sn-glycero-1-phosphate + diphosphate. The protein operates within membrane lipid metabolism; glycerophospholipid metabolism. Prenyltransferase that catalyzes in vivo the transfer of the heptaprenyl moiety of heptaprenyl pyrophosphate (HepPP; 35 carbon atoms) to the C3 hydroxyl of sn-glycerol-1-phosphate (G1P), producing heptaprenylglyceryl phosphate (HepGP). This reaction is an ether-bond-formation step in the biosynthesis of archaea-type G1P-based membrane lipids found in Bacillales. The polypeptide is Heptaprenylglyceryl phosphate synthase (Bacillus licheniformis (strain ATCC 14580 / DSM 13 / JCM 2505 / CCUG 7422 / NBRC 12200 / NCIMB 9375 / NCTC 10341 / NRRL NRS-1264 / Gibson 46)).